A 268-amino-acid polypeptide reads, in one-letter code: Protein MGF 300-1L (268 aa).

Residues 1–175 lie on the Cytoplasmic side of the membrane; the sequence is MVSLTTCCLK…QTFKTFYAKN (175 aa). Residues 176 to 193 form a helical membrane-spanning segment; that stretch reads YSLSTLYCIFLAIYYKLY. Topologically, residues 194–268 are extracellular; the sequence is TALRKMVKIY…MYAFSQNDYW (75 aa).

Belongs to the asfivirus MGF 300 family.

It is found in the host membrane. Its function is as follows. Plays a role in virus cell tropism, and may be required for efficient virus replication in macrophages. The chain is Protein MGF 300-1L from Ornithodoros (relapsing fever ticks).